A 576-amino-acid polypeptide reads, in one-letter code: Flagellin B (576 aa).

This sequence belongs to the bacterial flagellin family. Heteromer of FlaA and FlaB. Interacts with FliW. Interacts with FliS.

The protein resides in the secreted. Its subcellular location is the bacterial flagellum. Functionally, flagellin is the subunit protein which polymerizes to form the filaments of bacterial flagella. The sequence is that of Flagellin B (flaB) from Campylobacter jejuni subsp. jejuni serotype O:6 (strain 81116 / NCTC 11828).